A 492-amino-acid chain; its full sequence is Catalase isozyme 2 (492 aa).

Residues histidine 65 and asparagine 138 contribute to the active site. Tyrosine 348 provides a ligand contact to heme.

The protein belongs to the catalase family. In terms of assembly, homotetramer. The cofactor is heme.

The protein resides in the peroxisome. Its subcellular location is the glyoxysome. It carries out the reaction 2 H2O2 = O2 + 2 H2O. Occurs in almost all aerobically respiring organisms and serves to protect cells from the toxic effects of hydrogen peroxide. This chain is Catalase isozyme 2 (CAT2), found in Solanum tuberosum (Potato).